The following is a 641-amino-acid chain: WW domain-binding protein 11 (641 aa).

Residues 1–11 show a composition bias toward polar residues; the sequence is MGRRSTSSTKS. Residues 1–37 are disordered; that stretch reads MGRRSTSSTKSGKFMNPTDQARKEARKRELKKNKKQR. The interval 1–45 is required for nuclear import; that stretch reads MGRRSTSSTKSGKFMNPTDQARKEARKRELKKNKKQRMMVRAAVL. N6-acetyllysine is present on K13. Residues 28–37 show a composition bias toward basic residues; it reads RELKKNKKQR. Residues 75–133 adopt a coiled-coil conformation; it reads EKVLKDKRKKLRETFERILRLYEKENPDIYKELRKLEVEYEQKRAQLSQYFDAVKNAQH. S181 carries the phosphoserine modification. The tract at residues 186–213 is disordered; that stretch reads LGHGVPRLPPGRKPPGPPPGPPPPQVLQ. R192 carries the post-translational modification Omega-N-methylarginine. Residues 192–210 show a composition bias toward pro residues; that stretch reads RLPPGRKPPGPPPGPPPPQ. Positions 217 to 221 are interaction with PP1; it reads RKVGF. Phosphotyrosine is present on Y236. The disordered stretch occupies residues 236 to 549; that stretch reads YSPELAQRGH…LIQRPKADDA (314 aa). The residue at position 237 (S237) is a Phosphoserine. The segment covering 253–263 has biased composition (acidic residues); it reads SEDDGYPEDMD. The segment covering 276–304 has biased composition (basic and acidic residues); the sequence is TDRSDAESDGDEFGHRDDSERDNTEEKKS. Residues S279 and S283 each carry the phosphoserine modification. Positions 306–310 are interaction with PP1; it reads LSVRF. The segment covering 351–365 has biased composition (acidic residues); the sequence is EFSEEEDDDDSEDSE. S353, S361, and S364 each carry phosphoserine. A compositionally biased stretch (basic and acidic residues) spans 366 to 380; that stretch reads AEKPSQKQHKEDSHA. Residues 381 to 404 are compositionally biased toward low complexity; it reads DGSSAASSQQQAPPQAVPPSQIQA. Composition is skewed to pro residues over residues 405 to 447, 456 to 504, and 510 to 530; these read PPMP…PPGM, RLLP…PPRP, and PLVP…PLPN. Positions 455 to 466 match the PGR motif; that stretch reads PRLLPPGPPPGR. Residue K557 forms a Glycyl lysine isopeptide (Lys-Gly) (interchain with G-Cter in SUMO2) linkage. K565 carries the N6-acetyllysine modification. A Glycyl lysine isopeptide (Lys-Gly) (interchain with G-Cter in SUMO2) cross-link involves residue K572. The interval 588-623 is disordered; sequence ENKGATAVPQRRSEEDSAVPVAKAAPRSGPSVPVSV. At S600 the chain carries Phosphoserine.

As to quaternary structure, interacts with PPP1CA, PPP1CB and PPP1CC. Interacts via the PGR motif with PQBP1 in the nucleus. Interacts with the WW domains of WBP4.

Its subcellular location is the nucleus. The protein localises to the cytoplasm. Activates pre-mRNA splicing. May inhibit PP1 phosphatase activity. The sequence is that of WW domain-binding protein 11 (Wbp11) from Rattus norvegicus (Rat).